The chain runs to 564 residues: Aspyridones efflux protein (564 aa).

The segment covering 1 to 17 has biased composition (low complexity); that stretch reads MHPDQADTAAMQQQTTT. Residues 1–49 are disordered; sequence MHPDQADTAAMQQQTTTECSDRSRPEKAEEGHAREHTVTRTCSREPEQT. The segment covering 19 to 47 has biased composition (basic and acidic residues); that stretch reads CSDRSRPEKAEEGHAREHTVTRTCSREPE. The next 10 helical transmembrane spans lie at 66 to 86, 127 to 147, 158 to 178, 185 to 205, 216 to 236, 260 to 280, 287 to 307, 335 to 355, 368 to 388, and 392 to 412; these read AICL…TAIP, WTFL…ATAP, IAGC…THSV, LFMA…PPLG, WCFW…VFLF, VGTL…QWGG, SGIV…FGIV, FALG…FQGV, LPML…VTII, and APFM…LLLF. An N-linked (GlcNAc...) asparagine glycan is attached at Asn415. Helical transmembrane passes span 416–436 and 454–474; these read VTAA…GFGW and IATA…VSVA. A glycan (N-linked (GlcNAc...) asparagine) is linked at Asn524. Residues 528–548 traverse the membrane as a helical segment; it reads LSAFFVATIMAIMSLVGCTFV.

The protein belongs to the major facilitator superfamily. TCR/Tet family.

The protein resides in the cell membrane. Its function is as follows. Efflux pump that may be involved in the secretion of leporins. The chain is Aspyridones efflux protein (TP) from Neocamarosporium betae (Beet black rot fungus).